We begin with the raw amino-acid sequence, 393 residues long: tRNA(Met) cytidine acetate ligase (393 aa).

G81, N142, and R167 together coordinate ATP.

This sequence belongs to the TmcAL family.

It localises to the cytoplasm. The catalysed reaction is cytidine(34) in elongator tRNA(Met) + acetate + ATP = N(4)-acetylcytidine(34) in elongator tRNA(Met) + AMP + diphosphate. Functionally, catalyzes the formation of N(4)-acetylcytidine (ac(4)C) at the wobble position of elongator tRNA(Met), using acetate and ATP as substrates. First activates an acetate ion to form acetyladenylate (Ac-AMP) and then transfers the acetyl group to tRNA to form ac(4)C34. In Bacillus cytotoxicus (strain DSM 22905 / CIP 110041 / 391-98 / NVH 391-98), this protein is tRNA(Met) cytidine acetate ligase.